A 79-amino-acid polypeptide reads, in one-letter code: Cyclotide phyb-A (79 aa).

Residues 1 to 43 (MVGVNSLRSALYLIVLILFVQLTYFSDARVMDVDLSRAFLPLT) constitute a propeptide that is removed on maturation. The cyclopeptide (Gly-Asn) cross-link spans 44–73 (GIGCGESCVWIPCVSAAIGCSCSNKICYRN). Cystine bridges form between Cys47/Cys63, Cys51/Cys65, and Cys56/Cys70. The propeptide occupies 74–79 (GIIPKK).

Post-translationally, this is a cyclic peptide. In terms of processing, contains 3 disulfide bonds. Expressed in midvein, lamina and periphery of leaves (at protein level).

Probably participates in a plant defense mechanism. This Petunia hybrida (Petunia) protein is Cyclotide phyb-A.